A 397-amino-acid polypeptide reads, in one-letter code: Acylalkylpyrone synthase csyB (397 aa).

Residues lysine 50 and 50 to 57 (KMLEINRK) each bind CoA. Cysteine 155 (nucleophile) is an active-site residue. Residue 214 to 215 (GD) coordinates substrate. Residues isoleucine 267, glycine 312, 312–315 (GGYA), tyrosine 314, and alanine 315 contribute to the CoA site. The active site involves histidine 377.

The protein belongs to the thiolase-like superfamily. Chalcone/stilbene synthases family. Homodimer.

Acylalkylpyrone synthase that catalyzes not only the polyketide chain elongation but also the one-pot condensation of two beta-ketoacyl units to produce the 3-acyl-4-hydroxy-6-alkyl-alpha-pyrone (AcAP) scaffold, a precursor of csypyrone B. The enzyme reaction is initiated by the loading of acetoacetyl-CoA onto Cys-155, and subsequent thioester bond cleavage by the nucleophilic water generates the beta-keto acid intermediate, which is placed within a pocket. The second beta-ketoacyl unit is then produced by polyketide chain elongation of fatty acyl-CoA with one molecule of malonyl-CoA, and the condensation with the beta-ketoacid generates the final products. Csypyrone B1 is the major product and contains a propanoic acid side-chain, whereas csypyrones B2 and B3 are minor compounds that contain butyric or pentanoic acid side-chains, respectively. The polypeptide is Acylalkylpyrone synthase csyB (Aspergillus oryzae (strain ATCC 42149 / RIB 40) (Yellow koji mold)).